A 108-amino-acid chain; its full sequence is NADH dehydrogenase [ubiquinone] flavoprotein 3, mitochondrial (108 aa).

The N-terminal 34 residues, 1–34 (MAAPCLLRQGRAGALKTMLQEAQVFRGLASTVSL), are a transit peptide targeting the mitochondrion. Residues 33–72 (SLSAESGKSEKGQPQNSKKQSPPKKPAPVPAEPFDNTTYK) form a disordered region. Serine 105 carries the post-translational modification Phosphoserine.

It belongs to the complex I NDUFV3 subunit family. In terms of assembly, complex I is composed of 45 different subunits. This is a component of the flavoprotein-sulfur (FP) fragment of the enzyme.

The protein localises to the mitochondrion inner membrane. Accessory subunit of the mitochondrial membrane respiratory chain NADH dehydrogenase (Complex I), that is believed not to be involved in catalysis. Complex I functions in the transfer of electrons from NADH to the respiratory chain. The immediate electron acceptor for the enzyme is believed to be ubiquinone. May be the terminally assembled subunit of Complex I. This chain is NADH dehydrogenase [ubiquinone] flavoprotein 3, mitochondrial (NDUFV3), found in Homo sapiens (Human).